A 488-amino-acid chain; its full sequence is MIQGTTSDAGKSTLVAGLCRLARRAGARVAPFKPQNMALNSAVTADGGEIGRAQALQALAAGVAPHTDFNPVLLKPTSDRGAQVIIHGAARMNLDARAYHDYKPVAFDAVLESYARLRAGYDTVIVEGAGSPAEINLRDGDIANMGFAERVDCPVVLVADIDRGGVFAHLVGTLACLSDSERARVRGFVINRFRGDIGLLEPGLDWLRAQTGKPVFGVLPYLHGLLLDAEDMLPRQARSAATRDGAGVLRVVVPALPRISNHTDFDPLRAHPQVEFTYWKSGPVPAADLLILPGSKSVQRDLQWLRDAGWDTVIRRHLRYGGKVIGICGGMQMLGRTLDDPLGLEGAPGSVPGLGLFDFDTTLLPHKTLKNVTGQLALPGAPAVRGYEIHMGDTRGPALAAPALQLAADDAAGGSRADGALSADGQLLATYVHGLFDTPAACAALLAWAGLDGGERIDYPALREASIERLADSFAEHLDLRALYAEFR.

The 194-residue stretch at 248–441 (VLRVVVPALP…VHGLFDTPAA (194 aa)) folds into the GATase cobBQ-type domain. Cys-328 (nucleophile) is an active-site residue. The active site involves His-433.

This sequence belongs to the CobB/CobQ family. CobQ subfamily.

It functions in the pathway cofactor biosynthesis; adenosylcobalamin biosynthesis. Functionally, catalyzes amidations at positions B, D, E, and G on adenosylcobyrinic A,C-diamide. NH(2) groups are provided by glutamine, and one molecule of ATP is hydrogenolyzed for each amidation. In Burkholderia vietnamiensis (strain G4 / LMG 22486) (Burkholderia cepacia (strain R1808)), this protein is Cobyric acid synthase.